The sequence spans 134 residues: Small ribosomal subunit protein uS8c (134 aa).

It belongs to the universal ribosomal protein uS8 family. In terms of assembly, part of the 30S ribosomal subunit.

Its subcellular location is the plastid. It localises to the chloroplast. One of the primary rRNA binding proteins, it binds directly to 16S rRNA central domain where it helps coordinate assembly of the platform of the 30S subunit. The protein is Small ribosomal subunit protein uS8c (rps8) of Aethionema grandiflorum (Persian stone-cress).